The sequence spans 164 residues: UPF0305 protein MJ0646 (164 aa).

It belongs to the UPF0305 family.

This chain is UPF0305 protein MJ0646, found in Methanocaldococcus jannaschii (strain ATCC 43067 / DSM 2661 / JAL-1 / JCM 10045 / NBRC 100440) (Methanococcus jannaschii).